Here is a 638-residue protein sequence, read N- to C-terminus: Signal recognition particle receptor subunit alpha (638 aa).

Disordered stretches follow at residues 129-205 (KIRA…VELS), 218-245 (IQKH…KKAP), and 262-315 (SAPT…ATKG). Basic and acidic residues-rich tracts occupy residues 137–146 (KKFEDSEKAK) and 153–165 (IETR…EKAK). Phosphoserine is present on Ser-177. Positions 218–239 (IQKHGRGLEKSSKSTKSDAPKE) are enriched in basic and acidic residues. At Thr-284 the chain carries Phosphothreonine. Phosphoserine is present on residues Ser-296, Ser-297, and Ser-298. The span at 304-314 (AQNASKPSATK) shows a compositional bias: polar residues. Residues 419–636 (YVVTFCGVNG…NAKAVVAALM (218 aa)) are NG domain. Position 425-432 (425-432 (GVNGVGKS)) interacts with GTP. Ser-473 carries the post-translational modification Phosphoserine. 520–524 (DTAGR) contributes to the GTP binding site. Position 578 is a phosphothreonine (Thr-578). 588–591 (TKFD) is a GTP binding site.

The protein belongs to the GTP-binding SRP family. As to quaternary structure, heterodimer with SRPRB. Interacts with the signal recognition particle (SRP) complex subunit SRP54.

It localises to the endoplasmic reticulum membrane. Its function is as follows. Component of the SRP (signal recognition particle) receptor. Ensures, in conjunction with the signal recognition particle, the correct targeting of the nascent secretory proteins to the endoplasmic reticulum membrane system. Forms a guanosine 5'-triphosphate (GTP)-dependent complex with the SRP subunit SRP54. SRP receptor compaction and GTPase rearrangement drive SRP-mediated cotranslational protein translocation into the ER. In Canis lupus familiaris (Dog), this protein is Signal recognition particle receptor subunit alpha.